An 88-amino-acid polypeptide reads, in one-letter code: Yop proteins translocation protein S (88 aa).

The next 2 helical transmembrane spans lie at 15–35 (WLVL…GTLV) and 49–69 (LGFV…ASWL).

Belongs to the FliQ/MopD/SpaQ family.

The protein resides in the cell membrane. Component of the Yop secretion machinery. This chain is Yop proteins translocation protein S (yscS), found in Yersinia pestis.